We begin with the raw amino-acid sequence, 530 residues long: uncharacterized protein (530 aa).

This is an uncharacterized protein from Acanthamoeba polyphaga (Amoeba).